A 132-amino-acid chain; its full sequence is Small ribosomal subunit protein uS8 (132 aa).

This sequence belongs to the universal ribosomal protein uS8 family. In terms of assembly, part of the 30S ribosomal subunit. Contacts proteins S5 and S12.

Functionally, one of the primary rRNA binding proteins, it binds directly to 16S rRNA central domain where it helps coordinate assembly of the platform of the 30S subunit. The chain is Small ribosomal subunit protein uS8 from Anaeromyxobacter dehalogenans (strain 2CP-1 / ATCC BAA-258).